Reading from the N-terminus, the 161-residue chain is Endoribonuclease YbeY (161 aa).

The Zn(2+) site is built by H127, H131, and H137.

Belongs to the endoribonuclease YbeY family. Zn(2+) is required as a cofactor.

It is found in the cytoplasm. Functionally, single strand-specific metallo-endoribonuclease involved in late-stage 70S ribosome quality control and in maturation of the 3' terminus of the 16S rRNA. The sequence is that of Endoribonuclease YbeY from Listeria innocua serovar 6a (strain ATCC BAA-680 / CLIP 11262).